The chain runs to 512 residues: PTS system mannitol-specific EIICB component (512 aa).

The Cytoplasmic portion of the chain corresponds to 1-28; the sequence is MSQTEEKKGIGRRVQAFGSFLSSMIMPN. The PTS EIIC type-2 domain maps to 17–349; the sequence is FGSFLSSMIM…MKFTREPKQD (333 aa). Residues 29–50 traverse the membrane as a helical segment; that stretch reads IGAFIAWGFIAAIFIDNGWLPN. At 51 to 54 the chain is on the extracellular side; it reads KDLA. A helical membrane pass occupies residues 55 to 75; it reads TLAGPMITYLIPLLIAFSGGR. At 76–139 the chain is on the cytoplasmic side; sequence LIYDLRGGII…QGFEMLFNNF (64 aa). The helical transmembrane segment at 140 to 161 threads the bilayer; sequence SAGILGFIMTIAGFKILAPLMK. Topologically, residues 162–170 are extracellular; it reads FIMHILSVA. Residues 171–191 form a helical membrane-spanning segment; the sequence is VEALVHAHLLPLVSILVEPAK. At 192 to 278 the chain is on the cytoplasmic side; the sequence is IVFLNNAINH…VLMRPLLFIA (87 aa). A helical transmembrane segment spans residues 279 to 298; sequence VILGGMTGVATYQATGFGFK. The Extracellular segment spans residues 299-318; sequence SPASPGSFIVYCLNAPRGEF. Residues 319–340 traverse the membrane as a helical segment; the sequence is LHMLLGVFLAALVSFVVAALIM. The Cytoplasmic portion of the chain corresponds to 341 to 512; the sequence is KFTREPKQDL…LNNLKKDDQA (172 aa). Residues 355–402 are disordered; the sequence is AQMENTKGKKSSVASKLVSSDKNVNTEENASGNVSETSSSDDDPEALL. Over residues 365–376 the composition is skewed to low complexity; it reads SSVASKLVSSDK. Residues 380–392 show a composition bias toward polar residues; that stretch reads TEENASGNVSETS. The 94-residue stretch at 419–512 folds into the PTS EIIB type-2 domain; it reads NHVIFACDAG…LNNLKKDDQA (94 aa). Residue Cys-425 is the Phosphocysteine intermediate; for EIIB activity of the active site. Phosphocysteine; by EIIA is present on Cys-425.

As to quaternary structure, homodimer.

It is found in the cell membrane. It carries out the reaction D-mannitol(out) + N(pros)-phospho-L-histidyl-[protein] = D-mannitol 1-phosphate(in) + L-histidyl-[protein]. In terms of biological role, the phosphoenolpyruvate-dependent sugar phosphotransferase system (sugar PTS), a major carbohydrate active transport system, catalyzes the phosphorylation of incoming sugar substrates concomitantly with their translocation across the cell membrane. The enzyme II CmtAB PTS system is involved in D-mannitol transport. The chain is PTS system mannitol-specific EIICB component (mtlA) from Staphylococcus aureus (strain COL).